The following is a 300-amino-acid chain: Dihydroorotate dehydrogenase B (NAD(+)), catalytic subunit (300 aa).

FMN is bound by residues serine 20 and lysine 44 to serine 45. Substrate is bound by residues lysine 44, asparagine 68–leucine 72, and asparagine 122. FMN is bound at residue asparagine 122. Cysteine 125 functions as the Nucleophile in the catalytic mechanism. The FMN site is built by lysine 160 and isoleucine 186. Asparagine 187–threonine 188 is a substrate binding site. Residues glycine 212, glycine 238–glycine 239, and glycine 260–threonine 261 contribute to the FMN site.

This sequence belongs to the dihydroorotate dehydrogenase family. Type 1 subfamily. Heterotetramer of 2 PyrK and 2 PyrD type B subunits. FMN is required as a cofactor.

Its subcellular location is the cytoplasm. The enzyme catalyses (S)-dihydroorotate + NAD(+) = orotate + NADH + H(+). The protein operates within pyrimidine metabolism; UMP biosynthesis via de novo pathway; orotate from (S)-dihydroorotate (NAD(+) route): step 1/1. Catalyzes the conversion of dihydroorotate to orotate with NAD(+) as electron acceptor. This Pyrococcus furiosus (strain ATCC 43587 / DSM 3638 / JCM 8422 / Vc1) protein is Dihydroorotate dehydrogenase B (NAD(+)), catalytic subunit (pyrD).